The sequence spans 94 residues: uncharacterized protein (94 aa).

A signal peptide spans Met-1–Ala-22.

This is an uncharacterized protein from Escherichia coli (strain K12).